A 334-amino-acid polypeptide reads, in one-letter code: RNA polymerase sigma factor RpoS (334 aa).

A disordered region spans residues 21 to 50; sequence PGIMLDESSADEQPSPRATPKATTSFSSKQ. The sigma-70 factor domain-1 stretch occupies residues 61 to 94; sequence DATQLYLNEIGFSPLLTPEEEVHFARLAQKGDPA. The segment at 99–169 is sigma-70 factor domain-2; sequence MIESNLRLVV…ERAIMNQTRT (71 aa). Positions 123–126 match the Interaction with polymerase core subunit RpoC motif; the sequence is DLIE. A sigma-70 factor domain-3 region spans residues 179–254; it reads ELNVYLRAAR…DDRPTDPCEL (76 aa). Positions 267 to 320 are sigma-70 factor domain-4; the sequence is WLTELTDKQREVVIRRFGLRGHESSTLEEVGQEIGLTRERVRQIQVEALKRLRE. Positions 293–312 form a DNA-binding region, H-T-H motif; the sequence is LEEVGQEIGLTRERVRQIQV.

The protein belongs to the sigma-70 factor family. RpoS subfamily. As to quaternary structure, interacts with the RNA polymerase core enzyme.

Its subcellular location is the cytoplasm. Sigma factors are initiation factors that promote the attachment of RNA polymerase to specific initiation sites and are then released. This sigma factor is the master transcriptional regulator of the stationary phase and the general stress response. In Pseudomonas aeruginosa (strain ATCC 15692 / DSM 22644 / CIP 104116 / JCM 14847 / LMG 12228 / 1C / PRS 101 / PAO1), this protein is RNA polymerase sigma factor RpoS.